The primary structure comprises 394 residues: Elongation factor Tu 1 (394 aa).

Residues 10–204 (KPHVNVGTIG…YLDSYIPEPE (195 aa)) enclose the tr-type G domain. The G1 stretch occupies residues 19–26 (GHVDHGKT). Residue 19 to 26 (GHVDHGKT) participates in GTP binding. Thr-26 is a binding site for Mg(2+). The segment at 60 to 64 (GITIN) is G2. Residues 81 to 84 (DCPG) form a G3 region. GTP is bound by residues 81–85 (DCPGH) and 136–139 (NKCD). Positions 136–139 (NKCD) are G4. The interval 174 to 176 (SAL) is G5.

It belongs to the TRAFAC class translation factor GTPase superfamily. Classic translation factor GTPase family. EF-Tu/EF-1A subfamily. Monomer.

Its subcellular location is the cytoplasm. The enzyme catalyses GTP + H2O = GDP + phosphate + H(+). GTP hydrolase that promotes the GTP-dependent binding of aminoacyl-tRNA to the A-site of ribosomes during protein biosynthesis. The sequence is that of Elongation factor Tu 1 from Yersinia enterocolitica serotype O:8 / biotype 1B (strain NCTC 13174 / 8081).